Here is a 72-residue protein sequence, read N- to C-terminus: Translation initiation factor IF-1 (72 aa).

An S1-like domain is found at 1–72 (MSKEELLEFP…TKGRITYRFK (72 aa)).

The protein belongs to the IF-1 family. As to quaternary structure, component of the 30S ribosomal translation pre-initiation complex which assembles on the 30S ribosome in the order IF-2 and IF-3, IF-1 and N-formylmethionyl-tRNA(fMet); mRNA recruitment can occur at any time during PIC assembly.

The protein localises to the cytoplasm. One of the essential components for the initiation of protein synthesis. Stabilizes the binding of IF-2 and IF-3 on the 30S subunit to which N-formylmethionyl-tRNA(fMet) subsequently binds. Helps modulate mRNA selection, yielding the 30S pre-initiation complex (PIC). Upon addition of the 50S ribosomal subunit IF-1, IF-2 and IF-3 are released leaving the mature 70S translation initiation complex. The protein is Translation initiation factor IF-1 of Parvibaculum lavamentivorans (strain DS-1 / DSM 13023 / NCIMB 13966).